A 287-amino-acid chain; its full sequence is 4-hydroxybenzoate octaprenyltransferase (287 aa).

6 helical membrane passes run 41-61 (VSLL…GCAI), 92-112 (VALA…LNAL), 133-153 (FFAI…PMAF), 160-180 (VPLL…AYDT), 197-217 (TSAL…YAVT), and 267-287 (NNWL…AQAF).

It belongs to the UbiA prenyltransferase family. Mg(2+) is required as a cofactor.

It is found in the cell inner membrane. The enzyme catalyses all-trans-octaprenyl diphosphate + 4-hydroxybenzoate = 4-hydroxy-3-(all-trans-octaprenyl)benzoate + diphosphate. The protein operates within cofactor biosynthesis; ubiquinone biosynthesis. Its function is as follows. Catalyzes the prenylation of para-hydroxybenzoate (PHB) with an all-trans polyprenyl group. Mediates the second step in the final reaction sequence of ubiquinone-8 (UQ-8) biosynthesis, which is the condensation of the polyisoprenoid side chain with PHB, generating the first membrane-bound Q intermediate 3-octaprenyl-4-hydroxybenzoate. This Paraburkholderia phymatum (strain DSM 17167 / CIP 108236 / LMG 21445 / STM815) (Burkholderia phymatum) protein is 4-hydroxybenzoate octaprenyltransferase.